A 459-amino-acid polypeptide reads, in one-letter code: Zinc finger protein ZPR1 (459 aa).

The span at 1–29 (MSAGGAVEPGLPAAAAAPSAAPARDPGPG) shows a compositional bias: low complexity. The interval 1-43 (MSAGGAVEPGLPAAAAAPSAAPARDPGPGHLFRPISAEDEEQQ) is disordered. 2 consecutive C4-type zinc fingers follow at residues 51–83 (CMNCYRNGMTRLLLTKIPFFREIIVSSFSCEHC) and 259–291 (CPECNAPAQTNMKLVQIPHFKEVIIMATNCENC). The tract at residues 438–459 (NEELGLNDMKTEGYETGLPAQR) is disordered.

This sequence belongs to the ZPR1 family. In terms of assembly, component of an import snRNP complex composed of KPNB1, SNUPN, SMN1 and ZNF259. Interacts (via C-terminal region) with SMN1 (via C-terminal region); the interaction occurs after treatment with serum. Interacts with elongation factor 1-alpha EEF1A1; the interaction occurs in a epidermal growth factor (EGF)-dependent manner. Interacts (via zinc fingers) with EGFR (via C-terminal cytoplasmic kinase domain); the interaction is negatively regulated in response to epidermal growth factor (EGF) stimulation and EGFR kinase activity. May also bind to the PDGFR receptor.

It is found in the nucleus. It localises to the cytoplasm. Its subcellular location is the nucleolus. The protein resides in the perinuclear region. The protein localises to the gem. It is found in the cajal body. It localises to the cell projection. Its subcellular location is the axon. The protein resides in the growth cone. Functionally, acts as a signaling molecule that communicates proliferative growth signals from the cytoplasm to the nucleus. Plays a role for the localization and accumulation of the survival motor neuron protein SMN1 in sub-nuclear bodies, including gems and Cajal bodies. Induces neuron differentiation and stimulates axonal growth and formation of growth cone in spinal cord motor neurons. Plays a role in the splicing of cellular pre-mRNAs. May be involved in H(2)O(2)-induced neuronal cell death. The polypeptide is Zinc finger protein ZPR1 (ZNF259) (Bos taurus (Bovine)).